A 669-amino-acid polypeptide reads, in one-letter code: DNA mismatch repair protein MutL (669 aa).

The interval 343-408 is disordered; that stretch reads SAFHRAEPEE…RAPSDSSVRE (66 aa). Over residues 344–356 the composition is skewed to basic and acidic residues; it reads AFHRAEPEERESQ. Residues 357–372 are compositionally biased toward polar residues; it reads PETTPQYSPQSVSTTV. Over residues 390–408 the composition is skewed to basic and acidic residues; that stretch reads TDYEIKPRDRAPSDSSVRE.

This sequence belongs to the DNA mismatch repair MutL/HexB family.

Its function is as follows. This protein is involved in the repair of mismatches in DNA. It is required for dam-dependent methyl-directed DNA mismatch repair. May act as a 'molecular matchmaker', a protein that promotes the formation of a stable complex between two or more DNA-binding proteins in an ATP-dependent manner without itself being part of a final effector complex. This Vibrio parahaemolyticus serotype O3:K6 (strain RIMD 2210633) protein is DNA mismatch repair protein MutL.